A 563-amino-acid chain; its full sequence is NADPH oxidase 1 (563 aa).

Residues 1–8 (MGNWLVNH) lie on the Cytoplasmic side of the membrane. Residues 9 to 31 (WLSVLFLVSWLGLNIFLFVYVFL) traverse the membrane as a helical segment. Residues 32-44 (NYEKSDKYYYTRE) are Extracellular-facing. The chain crosses the membrane as a helical span at residues 45–69 (ILGTALALARASALCLNFNSMVILI). Positions 54-282 (RASALCLNFN…LAPIAFYIFE (229 aa)) constitute a Ferric oxidoreductase domain. Residues 70–102 (PVCRNLLSFLRGTCSFCNHTLRKPLDHNLTFHK) are Cytoplasmic-facing. 2 residues coordinate heme: His-101 and His-115. Residues 103–123 (LVAYMICIFTAIHIIAHLFNF) traverse the membrane as a helical segment. Topologically, residues 124–167 (ERYSRSQQAMDGSLASVLSSLFHPEKEDSWLNPIQSPNVTVMYA) are extracellular. Residue Asn-161 is glycosylated (N-linked (GlcNAc...) asparagine). Residues 168-188 (AFTSIAGLTGVVATVALVLMV) traverse the membrane as a helical segment. At 189–206 (TSAMEFIRRNYFELFWYT) the chain is on the cytoplasmic side. A helical transmembrane segment spans residues 207–227 (HHLFIIYIICLGIHGLGGIVR). Heme contacts are provided by His-208 and His-220. At 228–395 (GQTEESMSES…TVSEDVFQYE (168 aa)) the chain is on the extracellular side. Asn-241 carries N-linked (GlcNAc...) asparagine glycosylation. One can recognise an FAD-binding FR-type domain in the interval 283–390 (RILRFYRSRQ…DGPFGTVSED (108 aa)). Position 337 to 343 (337 to 343 (HPFTLTS)) interacts with FAD. A helical membrane pass occupies residues 396–416 (VAVLVGAGIGVTPFASFLKSI). An interaction with NOXO1 region spans residues 396 to 535 (VAVLVGAGIG…GVFLCGPPTL (140 aa)). At 417–563 (WYKFQRAHNK…VQFYFNKETF (147 aa)) the chain is on the cytoplasmic side. Residue Thr-429 is modified to Phosphothreonine; by PKC/PRKCB.

NOX1, NOXA1, NOXO1, RAC1 and CYBA forms a functional multimeric complex supporting ROS production. Interacts with NOXO1. Interacts (via FAD-binding FR-type domain) with ARHGEF7 (via PH domain). The phosphorylated form at Thr-429 interacts with NOXA1 with greater affinity. FAD is required as a cofactor. Post-translationally, phosphorylation at Thr-429 mediated by PKC/PRKBC positively regulates its interaction with NOXA1 and enzyme activity. As to expression, expressed in vascular smooth muscle cells.

Its subcellular location is the cell projection. It localises to the invadopodium membrane. The protein resides in the cell membrane. The catalysed reaction is NADPH + 2 O2 = 2 superoxide + NADP(+) + H(+). The oxidase activity is potentiated by NOXA1 and NOXO1. NADPH oxidase that catalyzes the generation of superoxide from molecular oxygen utilizing NADPH as an electron donor. The polypeptide is NADPH oxidase 1 (Nox1) (Rattus norvegicus (Rat)).